The chain runs to 75 residues: Endogenous retrovirus group K member 10 Np9 protein (75 aa).

A disordered region spans residues 21–43; it reads PTAPKRQRPSRTGHDDDGGFVEK. A compositionally biased stretch (basic and acidic residues) spans 32 to 43; it reads TGHDDDGGFVEK.

The protein resides in the nucleus. In terms of biological role, may possess a function in tumorigenesis. In Homo sapiens (Human), this protein is Endogenous retrovirus group K member 10 Np9 protein (ERVK-10).